The primary structure comprises 697 residues: MMRPVVVKEKRVNESHIHAVEDEVRQAKTMDRDIVKHAMKQSVAKLNPKVMIKNPIMFVVEIGFVITFILSFLPSHSSSIPGWFNITVSLILLFTVLFANFAEALAEGRGKAQADSLKQSKKDVFANVVKENGEIVQVSATDLRKDDVVIVKQGEMIPSDGEVIKGLASVDESAITGESAPVIKEAGGDFCSVTGGTMVVSDEITIVITSNPGKSFIDKMISLVEGAARQKTPNEIALNTVLTSLTLIFLIVVVTLPIFTNYLGFQIDTAVLVALLVCLIPTTIGGLLSAIGIAGMDRVTKFNVLAMSGKAVEAAGDINTIILDKTGTITFGNRMAHTLLPVGNETIEQVGKWAAISSVLDETPEGRSVIEYVQAKSISYNRELAEQGEFIPFKAETRMSGVDLQDGMKVRKGAVGSVIEWVRSQGGTIPKDVNQKADFISKEGGTPLVVAVDNRIYGLIYLKDTVKPGMRERFEQLRQMGIKTVMCTGDNPLTAATIAKEAGVDEFVAECKPEDKIAVIKAEQDKGKLVAMTGDGTNDAPALAQADVGLAMNSGTTAAKEAANMIDLDSNPTKIIEVVGIGKQLLMTRGALTTFSIANDIAKYFAIIPAMFTLAIPQMEALNIMKLTSPLSAILSALLFNAVIIPLLIPLAMKGIAYKPMSSNALLGRNLLIYGLGGVIVPFIGIKVIDIIVGLFI.

The next 4 helical transmembrane spans lie at 55 to 75 (PIMF…FLPS), 79 to 99 (SIPG…VLFA), 245 to 265 (LTLI…YLGF), and 271 to 291 (VLVA…LSAI). The active-site 4-aspartylphosphate intermediate is D324. Residues D361, E365, 393–400 (FKAETRMS), and K412 each bind ATP. The Mg(2+) site is built by D535 and D539. 3 helical membrane-spanning segments follow: residues 605-625 (FAII…LNIM), 633-653 (AILS…PLAM), and 677-697 (GGVI…GLFI).

The protein belongs to the cation transport ATPase (P-type) (TC 3.A.3) family. Type IA subfamily. The system is composed of three essential subunits: KdpA, KdpB and KdpC.

It localises to the cell membrane. It carries out the reaction K(+)(out) + ATP + H2O = K(+)(in) + ADP + phosphate + H(+). Its function is as follows. Part of the high-affinity ATP-driven potassium transport (or Kdp) system, which catalyzes the hydrolysis of ATP coupled with the electrogenic transport of potassium into the cytoplasm. This subunit is responsible for energy coupling to the transport system and for the release of the potassium ions to the cytoplasm. The chain is Potassium-transporting ATPase ATP-binding subunit from Bacillus anthracis (strain CDC 684 / NRRL 3495).